Reading from the N-terminus, the 532-residue chain is CTP synthase (532 aa).

The interval 1–267 (MTKYIFVTGG…DDIVLEHLQL (267 aa)) is amidoligase domain. Serine 13 is a binding site for CTP. Serine 13 is a binding site for UTP. 14 to 19 (SIGKGI) lines the ATP pocket. L-glutamine is bound at residue tyrosine 54. Position 71 (aspartate 71) interacts with ATP. Residues aspartate 71 and glutamate 141 each coordinate Mg(2+). CTP-binding positions include 148–150 (DIE), 188–193 (KTKPTQ), and lysine 224. Residues 188 to 193 (KTKPTQ) and lysine 224 each bind UTP. The Glutamine amidotransferase type-1 domain occupies 292–532 (RIGLVGKYVS…DFVGAALKNK (241 aa)). Glycine 354 contacts L-glutamine. Cysteine 381 (nucleophile; for glutamine hydrolysis) is an active-site residue. Residues 382 to 385 (LGMQ), glutamate 405, and arginine 462 each bind L-glutamine. Catalysis depends on residues histidine 507 and glutamate 509.

Belongs to the CTP synthase family. As to quaternary structure, homotetramer.

It catalyses the reaction UTP + L-glutamine + ATP + H2O = CTP + L-glutamate + ADP + phosphate + 2 H(+). The enzyme catalyses L-glutamine + H2O = L-glutamate + NH4(+). The catalysed reaction is UTP + NH4(+) + ATP = CTP + ADP + phosphate + 2 H(+). It functions in the pathway pyrimidine metabolism; CTP biosynthesis via de novo pathway; CTP from UDP: step 2/2. Allosterically activated by GTP, when glutamine is the substrate; GTP has no effect on the reaction when ammonia is the substrate. The allosteric effector GTP functions by stabilizing the protein conformation that binds the tetrahedral intermediate(s) formed during glutamine hydrolysis. Inhibited by the product CTP, via allosteric rather than competitive inhibition. Catalyzes the ATP-dependent amination of UTP to CTP with either L-glutamine or ammonia as the source of nitrogen. Regulates intracellular CTP levels through interactions with the four ribonucleotide triphosphates. The polypeptide is CTP synthase (Listeria monocytogenes serovar 1/2a (strain ATCC BAA-679 / EGD-e)).